A 413-amino-acid polypeptide reads, in one-letter code: Synaptosomal-associated protein 47 (413 aa).

The region spanning 109 to 171 (AANIPSHVTR…DVADRLLTEL (63 aa)) is the t-SNARE coiled-coil homology 1 domain. A disordered region spans residues 321–342 (RHAASRPKGCTPHRELPTGGQE). In terms of domain architecture, t-SNARE coiled-coil homology 2 spans 350 to 412 (KNLPLFSEGE…DKQNRRMRKL (63 aa)).

It belongs to the SVAP1 family. Associates with the BLOC-1 complex. Interacts with BLOC1S6. Forms a complex containing SNAP47, VAMP2 and STX1A. As to expression, ubiquitously expressed with the most abundant expression in the brain. In brain, most highly expressed in the glomerular layer of the olfactory bulb, the cortex, striatum, hippocampus, and colliculi (at protein level).

The protein localises to the endomembrane system. The protein resides in the cytoplasm. It localises to the perinuclear region. In terms of biological role, may play a role in intracellular membrane fusion. In Mus musculus (Mouse), this protein is Synaptosomal-associated protein 47 (Snap47).